Consider the following 174-residue polypeptide: F-box protein At1g70360 (174 aa).

An F-box domain is found at 136–174 (PPCFISLPRELKHKILESLPGVDIGTLACVSSELRDMAS).

The polypeptide is F-box protein At1g70360 (Arabidopsis thaliana (Mouse-ear cress)).